Here is a 288-residue protein sequence, read N- to C-terminus: CBY1-interacting BAR domain-containing protein 2 (288 aa).

Positions 6 to 217 are BAR-like; the sequence is SRDSQVRVME…ESYDLEKDLE (212 aa). Disordered regions lie at residues 133 to 157 and 256 to 288; these read QKSP…VDAS and TIRS…RLNQ. A compositionally biased stretch (polar residues) spans 138–157; it reads DRQTISQAETSVQRASVDAS. Over residues 266–276 the composition is skewed to acidic residues; the sequence is SEDDSAEEDPV.

This sequence belongs to the CIBAR family. Homodimer (via BAR-like domain). Heterodimer (via BAR-like domain) with FAM92A. Interacts with CBY1.

It is found in the cytoplasm. Its subcellular location is the cytoskeleton. It localises to the microtubule organizing center. The protein resides in the centrosome. The protein localises to the centriole. It is found in the cilium basal body. May play a role in ciliogenesis. In cooperation with CBY1 may facilitate ciliogenesis likely by the recruitment and fusion of endosomal vesicles at distal appendages during early stages of ciliogenesis. The chain is CBY1-interacting BAR domain-containing protein 2 (CIBAR2) from Bos taurus (Bovine).